The following is a 251-amino-acid chain: MTKTMSNKESLEKLIFALDMGGGLDDVMSWVRRLAGHVGVFKVGKEAFTRFGPQLVQSIQETGSRVFLDLKFHDIPNTVARAAEGAVELGVAMFNVHALGGMSMMTETVESVKKMAGRRELPMPLILGVTVLTSLNDEDLQRLGFTCTTGELVLRLARMAQDAGLSGVVASAQDVEAIRAACGKDFVIVTPGIRGLARVAGDDQKRVLTAEEAVRRGSDYLVIGRPIRTAEDPVAAADDFCREIARGLSAR.

Substrate is bound by residues Asp19, Lys42, 69–78 (DLKFHDIPNT), Thr133, Arg194, Gln204, Gly224, and Arg225. Residue Lys71 is the Proton donor of the active site.

Belongs to the OMP decarboxylase family. Type 1 subfamily. Homodimer.

It carries out the reaction orotidine 5'-phosphate + H(+) = UMP + CO2. The protein operates within pyrimidine metabolism; UMP biosynthesis via de novo pathway; UMP from orotate: step 2/2. Catalyzes the decarboxylation of orotidine 5'-monophosphate (OMP) to uridine 5'-monophosphate (UMP). This Syntrophus aciditrophicus (strain SB) protein is Orotidine 5'-phosphate decarboxylase.